Reading from the N-terminus, the 191-residue chain is Imidazoleglycerol-phosphate dehydratase (191 aa).

This sequence belongs to the imidazoleglycerol-phosphate dehydratase family.

It is found in the cytoplasm. It carries out the reaction D-erythro-1-(imidazol-4-yl)glycerol 3-phosphate = 3-(imidazol-4-yl)-2-oxopropyl phosphate + H2O. It functions in the pathway amino-acid biosynthesis; L-histidine biosynthesis; L-histidine from 5-phospho-alpha-D-ribose 1-diphosphate: step 6/9. In Thermodesulfovibrio yellowstonii (strain ATCC 51303 / DSM 11347 / YP87), this protein is Imidazoleglycerol-phosphate dehydratase.